The following is a 331-amino-acid chain: Tetraacyldisaccharide 4'-kinase (331 aa).

60 to 67 (TVGGTGKT) contacts ATP.

Belongs to the LpxK family.

It carries out the reaction a lipid A disaccharide + ATP = a lipid IVA + ADP + H(+). Its pathway is glycolipid biosynthesis; lipid IV(A) biosynthesis; lipid IV(A) from (3R)-3-hydroxytetradecanoyl-[acyl-carrier-protein] and UDP-N-acetyl-alpha-D-glucosamine: step 6/6. Functionally, transfers the gamma-phosphate of ATP to the 4'-position of a tetraacyldisaccharide 1-phosphate intermediate (termed DS-1-P) to form tetraacyldisaccharide 1,4'-bis-phosphate (lipid IVA). In Pseudomonas syringae pv. syringae (strain B728a), this protein is Tetraacyldisaccharide 4'-kinase.